The following is a 282-amino-acid chain: Pantothenate synthetase (282 aa).

ATP is bound at residue 30 to 37 (MGALHRGH). His-37 (proton donor) is an active-site residue. Gln-61 serves as a coordination point for (R)-pantoate. Gln-61 serves as a coordination point for beta-alanine. 147–150 (GEKD) is a binding site for ATP. Gln-153 serves as a coordination point for (R)-pantoate. ATP is bound at residue 184-187 (LSSR).

It belongs to the pantothenate synthetase family. Homodimer.

The protein resides in the cytoplasm. The enzyme catalyses (R)-pantoate + beta-alanine + ATP = (R)-pantothenate + AMP + diphosphate + H(+). Its pathway is cofactor biosynthesis; (R)-pantothenate biosynthesis; (R)-pantothenate from (R)-pantoate and beta-alanine: step 1/1. In terms of biological role, catalyzes the condensation of pantoate with beta-alanine in an ATP-dependent reaction via a pantoyl-adenylate intermediate. This Rhizorhabdus wittichii (strain DSM 6014 / CCUG 31198 / JCM 15750 / NBRC 105917 / EY 4224 / RW1) (Sphingomonas wittichii) protein is Pantothenate synthetase.